The following is a 208-amino-acid chain: Holliday junction resolvase RecU (208 aa).

4 residues coordinate Mg(2+): Thr-86, Asp-88, Glu-101, and Gln-120.

It belongs to the RecU family. Mg(2+) is required as a cofactor.

It is found in the cytoplasm. It catalyses the reaction Endonucleolytic cleavage at a junction such as a reciprocal single-stranded crossover between two homologous DNA duplexes (Holliday junction).. Endonuclease that resolves Holliday junction intermediates in genetic recombination. Cleaves mobile four-strand junctions by introducing symmetrical nicks in paired strands. Promotes annealing of linear ssDNA with homologous dsDNA. Required for DNA repair, homologous recombination and chromosome segregation. The polypeptide is Holliday junction resolvase RecU (Lacticaseibacillus casei (strain BL23) (Lactobacillus casei)).